Here is a 492-residue protein sequence, read N- to C-terminus: Glutamyl-tRNA(Gln) amidotransferase subunit A, mitochondrial (492 aa).

Catalysis depends on charge relay system residues Lys-78 and Ser-159. Ser-183 functions as the Acyl-ester intermediate in the catalytic mechanism.

The protein belongs to the amidase family. GatA subfamily. As to quaternary structure, subunit of the heterotrimeric GatCAB amidotransferase (AdT) complex, composed of A, B and C subunits.

Its subcellular location is the mitochondrion. It catalyses the reaction L-glutamyl-tRNA(Gln) + L-glutamine + ATP + H2O = L-glutaminyl-tRNA(Gln) + L-glutamate + ADP + phosphate + H(+). Allows the formation of correctly charged Gln-tRNA(Gln) through the transamidation of misacylated Glu-tRNA(Gln) in the mitochondria. The reaction takes place in the presence of glutamine and ATP through an activated gamma-phospho-Glu-tRNA(Gln). The polypeptide is Glutamyl-tRNA(Gln) amidotransferase subunit A, mitochondrial (Anopheles gambiae (African malaria mosquito)).